We begin with the raw amino-acid sequence, 238 residues long: Uridylate kinase (238 aa).

An ATP-binding site is contributed by 10 to 13 (KFSG). An involved in allosteric activation by GTP region spans residues 18–23 (GDSGFG). Residue Gly-52 coordinates UMP. Gly-53 and Arg-57 together coordinate ATP. UMP contacts are provided by residues Asp-73 and 134 to 141 (TGNPFFTT). Residues Thr-161, Tyr-167, and Asp-170 each coordinate ATP.

It belongs to the UMP kinase family. As to quaternary structure, homohexamer.

Its subcellular location is the cytoplasm. It carries out the reaction UMP + ATP = UDP + ADP. It participates in pyrimidine metabolism; CTP biosynthesis via de novo pathway; UDP from UMP (UMPK route): step 1/1. Its activity is regulated as follows. Allosterically activated by GTP. Inhibited by UTP. In terms of biological role, catalyzes the reversible phosphorylation of UMP to UDP. This Campylobacter curvus (strain 525.92) protein is Uridylate kinase.